We begin with the raw amino-acid sequence, 417 residues long: Serine hydroxymethyltransferase (417 aa).

(6S)-5,6,7,8-tetrahydrofolate is bound by residues Leu-121 and 125 to 127 (GHL). Lys-229 carries the post-translational modification N6-(pyridoxal phosphate)lysine. (6S)-5,6,7,8-tetrahydrofolate is bound at residue 355–357 (SSF).

Belongs to the SHMT family. In terms of assembly, homodimer. Pyridoxal 5'-phosphate serves as cofactor.

The protein localises to the cytoplasm. It carries out the reaction (6R)-5,10-methylene-5,6,7,8-tetrahydrofolate + glycine + H2O = (6S)-5,6,7,8-tetrahydrofolate + L-serine. The protein operates within one-carbon metabolism; tetrahydrofolate interconversion. It participates in amino-acid biosynthesis; glycine biosynthesis; glycine from L-serine: step 1/1. Functionally, catalyzes the reversible interconversion of serine and glycine with tetrahydrofolate (THF) serving as the one-carbon carrier. This reaction serves as the major source of one-carbon groups required for the biosynthesis of purines, thymidylate, methionine, and other important biomolecules. Also exhibits THF-independent aldolase activity toward beta-hydroxyamino acids, producing glycine and aldehydes, via a retro-aldol mechanism. The sequence is that of Serine hydroxymethyltransferase from Baumannia cicadellinicola subsp. Homalodisca coagulata.